A 187-amino-acid chain; its full sequence is Inner membrane-spanning protein YciB (187 aa).

5 helical membrane passes run 22 to 42 (IYVA…VTYA), 50 to 70 (MQLI…FFHD), 80 to 100 (IIYV…KSVV), 118 to 138 (INWA…YIAY), and 148 to 168 (FKVF…GVYI).

It belongs to the YciB family.

It is found in the cell inner membrane. Plays a role in cell envelope biogenesis, maintenance of cell envelope integrity and membrane homeostasis. The sequence is that of Inner membrane-spanning protein YciB from Vibrio parahaemolyticus serotype O3:K6 (strain RIMD 2210633).